Consider the following 267-residue polypeptide: Hydroxyethylthiazole kinase (267 aa).

A substrate-binding site is contributed by Met42. The ATP site is built by Cys118 and Thr162. Gly189 serves as a coordination point for substrate.

It belongs to the Thz kinase family. Mg(2+) is required as a cofactor.

The catalysed reaction is 5-(2-hydroxyethyl)-4-methylthiazole + ATP = 4-methyl-5-(2-phosphooxyethyl)-thiazole + ADP + H(+). It functions in the pathway cofactor biosynthesis; thiamine diphosphate biosynthesis; 4-methyl-5-(2-phosphoethyl)-thiazole from 5-(2-hydroxyethyl)-4-methylthiazole: step 1/1. Catalyzes the phosphorylation of the hydroxyl group of 4-methyl-5-beta-hydroxyethylthiazole (THZ). This chain is Hydroxyethylthiazole kinase, found in Rubrobacter xylanophilus (strain DSM 9941 / JCM 11954 / NBRC 16129 / PRD-1).